Consider the following 217-residue polypeptide: Transcription antitermination protein NusB (217 aa).

The protein belongs to the NusB family.

Involved in transcription antitermination. Required for transcription of ribosomal RNA (rRNA) genes. Binds specifically to the boxA antiterminator sequence of the ribosomal RNA (rrn) operons. The sequence is that of Transcription antitermination protein NusB from Microcystis aeruginosa (strain NIES-843 / IAM M-2473).